Reading from the N-terminus, the 323-residue chain is Quinolinate synthase (323 aa).

The iminosuccinate site is built by His38 and Ser55. Cys100 contacts [4Fe-4S] cluster. Residues 126–128 (YIN) and Ser143 contribute to the iminosuccinate site. Cys186 lines the [4Fe-4S] cluster pocket. Iminosuccinate contacts are provided by residues 212–214 (HPE) and Thr229. [4Fe-4S] cluster is bound at residue Cys279.

It belongs to the quinolinate synthase family. Type 2 subfamily. It depends on [4Fe-4S] cluster as a cofactor.

It localises to the cytoplasm. The catalysed reaction is iminosuccinate + dihydroxyacetone phosphate = quinolinate + phosphate + 2 H2O + H(+). The protein operates within cofactor biosynthesis; NAD(+) biosynthesis; quinolinate from iminoaspartate: step 1/1. In terms of biological role, catalyzes the condensation of iminoaspartate with dihydroxyacetone phosphate to form quinolinate. This chain is Quinolinate synthase, found in Gloeothece citriformis (strain PCC 7424) (Cyanothece sp. (strain PCC 7424)).